Reading from the N-terminus, the 785-residue chain is Protein SEY1 (785 aa).

At 1 to 690 (MTDLEVSAIQ…KRSVINSKTE (690 aa)) the chain is on the cytoplasmic side. A GB1/RHD3-type G domain is found at 40–266 (GLNYHIVSVF…SEDQLFNEGY (227 aa)). 50–57 (GSQSTGKS) provides a ligand contact to GTP. Residues 451-479 (PKLRELEEELSNLRTELVNKEQENIKTKI) are a coiled coil. The helical transmembrane segment at 691–711 (VPLYIYALLLVLGWNEFMIIL) threads the bilayer. Residues 712-714 (RNP) lie on the Lumenal side of the membrane. Residues 715–735 (LLITLLLIGLTGLYLGYKTKL) traverse the membrane as a helical segment. Over 736–785 (LGPIVQVVQAMIQELQDQAKNKLRDVLVSEPEAPSQVRIGKEVDATKDED) the chain is Cytoplasmic.

It belongs to the TRAFAC class dynamin-like GTPase superfamily. GB1/RHD3 GTPase family. RHD3 subfamily.

It is found in the endoplasmic reticulum membrane. Functionally, cooperates with the reticulon proteins and tubule-shaping DP1 family proteins to generate and maintain the structure of the tubular endoplasmic reticulum network. Has GTPase activity, which is required for its function in ER organization. The protein is Protein SEY1 of Komagataella phaffii (strain GS115 / ATCC 20864) (Yeast).